A 337-amino-acid polypeptide reads, in one-letter code: Ketol-acid reductoisomerase (NADP(+)) (337 aa).

A KARI N-terminal Rossmann domain is found at Ile3–Thr183. Residues Tyr26 to Gln29, Arg49, Ser52, Ser54, and Asp84 to Gln87 each bind NADP(+). His109 is an active-site residue. NADP(+) is bound at residue Gly135. Positions Thr184–Val329 constitute a KARI C-terminal knotted domain. 4 residues coordinate Mg(2+): Asp192, Glu196, Glu228, and Glu232. Ser253 provides a ligand contact to substrate.

It belongs to the ketol-acid reductoisomerase family. Mg(2+) is required as a cofactor.

It carries out the reaction (2R)-2,3-dihydroxy-3-methylbutanoate + NADP(+) = (2S)-2-acetolactate + NADPH + H(+). The catalysed reaction is (2R,3R)-2,3-dihydroxy-3-methylpentanoate + NADP(+) = (S)-2-ethyl-2-hydroxy-3-oxobutanoate + NADPH + H(+). Its pathway is amino-acid biosynthesis; L-isoleucine biosynthesis; L-isoleucine from 2-oxobutanoate: step 2/4. It participates in amino-acid biosynthesis; L-valine biosynthesis; L-valine from pyruvate: step 2/4. Functionally, involved in the biosynthesis of branched-chain amino acids (BCAA). Catalyzes an alkyl-migration followed by a ketol-acid reduction of (S)-2-acetolactate (S2AL) to yield (R)-2,3-dihydroxy-isovalerate. In the isomerase reaction, S2AL is rearranged via a Mg-dependent methyl migration to produce 3-hydroxy-3-methyl-2-ketobutyrate (HMKB). In the reductase reaction, this 2-ketoacid undergoes a metal-dependent reduction by NADPH to yield (R)-2,3-dihydroxy-isovalerate. The polypeptide is Ketol-acid reductoisomerase (NADP(+)) (Corynebacterium urealyticum (strain ATCC 43042 / DSM 7109)).